Consider the following 231-residue polypeptide: Acyltransferase PGAP2 (231 aa).

Residues 1-22 (MQQVPYGSVDRDKPLIRVPFTR) are Cytoplasmic-facing. The chain crosses the membrane as a helical span at residues 23–43 (LAVITVCLPLLGLVACIVLAM). The Lumenal segment spans residues 44-78 (LYHYNDATYTHCQVPNYLPSISAAISLTPERYIWR). Residues 79–99 (FSIGLHSAPRFLVAAAYLSFY) traverse the membrane as a helical segment. The Cytoplasmic segment spans residues 100 to 110 (RGRFSRRLTEQ). The chain crosses the membrane as a helical span at residues 111–131 (LLSGFTFLLALSENVGLLLLT). Residues 132–146 (YVSSTETYSVHKSGF) are Lumenal-facing. The helical transmembrane segment at 147–167 (ILFIGSSLFHMLCTCKLWSLI) threads the bilayer. At 168–179 (VKYSISSEEMMS) the chain is on the cytoplasmic side. The chain crosses the membrane as a helical span at residues 180–200 (YWFKLRLFLFNGGCCVLAVYF). The Lumenal portion of the chain corresponds to 201-231 (YRRHNTYCEEGITHASRCVSIWWCCPTWPST).

It belongs to the PGAP2 family.

It is found in the golgi apparatus membrane. Involved in the fatty acid remodeling steps of GPI-anchor maturation where the unsaturated acyl chain at sn-2 of inositol phosphate is replaced by a saturated stearoyl chain. May catalyze the second step of the fatty acid remodeling, by reacylating a lyso-GPI intermediate at sn-2 of inositol phosphate by a saturated chain. The fatty acid remodeling steps is critical for the integration of GPI-APs into lipid rafts. This chain is Acyltransferase PGAP2, found in Danio rerio (Zebrafish).